We begin with the raw amino-acid sequence, 930 residues long: Isoleucine--tRNA ligase (930 aa).

A 'HIGH' region motif is present at residues 57–67; it reads PYANGNIHVGH. E554 is a binding site for L-isoleucyl-5'-AMP. Residues 595-599 carry the 'KMSKS' region motif; it reads KMSKS. K598 is a binding site for ATP. Zn(2+)-binding residues include C888, C891, C908, and C911.

It belongs to the class-I aminoacyl-tRNA synthetase family. IleS type 1 subfamily. In terms of assembly, monomer. Requires Zn(2+) as cofactor.

It localises to the cytoplasm. The catalysed reaction is tRNA(Ile) + L-isoleucine + ATP = L-isoleucyl-tRNA(Ile) + AMP + diphosphate. Functionally, catalyzes the attachment of isoleucine to tRNA(Ile). As IleRS can inadvertently accommodate and process structurally similar amino acids such as valine, to avoid such errors it has two additional distinct tRNA(Ile)-dependent editing activities. One activity is designated as 'pretransfer' editing and involves the hydrolysis of activated Val-AMP. The other activity is designated 'posttransfer' editing and involves deacylation of mischarged Val-tRNA(Ile). The sequence is that of Isoleucine--tRNA ligase from Streptococcus pneumoniae (strain Taiwan19F-14).